A 155-amino-acid polypeptide reads, in one-letter code: Small ribosomal subunit protein uS7c (155 aa).

It belongs to the universal ribosomal protein uS7 family. As to quaternary structure, part of the 30S ribosomal subunit.

It is found in the plastid. The protein resides in the chloroplast. In terms of biological role, one of the primary rRNA binding proteins, it binds directly to 16S rRNA where it nucleates assembly of the head domain of the 30S subunit. The protein is Small ribosomal subunit protein uS7c (rps7) of Hydrastis canadensis (Goldenseal).